The following is a 281-amino-acid chain: Auxin-responsive protein IAA10 (281 aa).

2 disordered regions span residues 1–115 and 130–157; these read MRGG…VVGW and AKEN…EEGE. Residues 7-17 show a composition bias toward low complexity; sequence GPTAGEPPGTE. The span at 18–35 shows a compositional bias: acidic residues; that stretch reads AEAEEVEESSAGDDEELE. The short motif at 36 to 40 is the EAR-like (transcriptional repression) element; it reads LGLSL. 2 stretches are compositionally biased toward low complexity: residues 36–49 and 63–84; these read LGLS…QQQQ and PAAA…AAAA. A compositionally biased stretch (basic and acidic residues) spans 133 to 157; it reads NTSETDTKKTATNESDVQKDKEEGE. Positions 163-259 constitute a PB1 domain; the sequence is AGWVKVNMDG…KRLRIMRTSD (97 aa).

The protein belongs to the Aux/IAA family. Homodimers and heterodimers. In terms of tissue distribution, highly expressed in flowers. Expressed in shoots.

The protein resides in the nucleus. Aux/IAA proteins are short-lived transcriptional factors that function as repressors of early auxin response genes at low auxin concentrations. In Oryza sativa subsp. indica (Rice), this protein is Auxin-responsive protein IAA10 (IAA10).